The following is a 276-amino-acid chain: Large ribosomal subunit protein uL2 (276 aa).

2 disordered regions span residues 1-20 (MGIKKYNPTTNGRRNMTTND) and 219-276 (TVRG…RRKK). Polar residues predominate over residues 7–20 (NPTTNGRRNMTTND).

The protein belongs to the universal ribosomal protein uL2 family. In terms of assembly, part of the 50S ribosomal subunit. Forms a bridge to the 30S subunit in the 70S ribosome.

Its function is as follows. One of the primary rRNA binding proteins. Required for association of the 30S and 50S subunits to form the 70S ribosome, for tRNA binding and peptide bond formation. It has been suggested to have peptidyltransferase activity; this is somewhat controversial. Makes several contacts with the 16S rRNA in the 70S ribosome. This chain is Large ribosomal subunit protein uL2, found in Bacillus cereus (strain G9842).